A 295-amino-acid polypeptide reads, in one-letter code: Proline-rich protein 32 (295 aa).

Disordered regions lie at residues 10–48 (GHAP…GHPG) and 101–120 (ATGE…SGQD).

This is Proline-rich protein 32 (PRR32) from Bos taurus (Bovine).